The following is a 127-amino-acid chain: Fumarate reductase subunit C (127 aa).

3 consecutive transmembrane segments (helical) span residues 30-50 (ATVL…GSLV), 67-87 (IVVA…QTFF), and 107-127 (IIVL…LIVM).

The protein belongs to the FrdC family. Part of an enzyme complex containing four subunits: a flavoprotein (FrdA), an iron-sulfur protein (FrdB), and two hydrophobic anchor proteins (FrdC and FrdD).

The protein localises to the cell inner membrane. Its function is as follows. Anchors the catalytic components of the fumarate reductase complex to the cell membrane, binds quinones. The sequence is that of Fumarate reductase subunit C from Vibrio campbellii (strain ATCC BAA-1116).